We begin with the raw amino-acid sequence, 463 residues long: L-seryl-tRNA(Sec) selenium transferase (463 aa).

N6-(pyridoxal phosphate)lysine is present on Lys-295.

The protein belongs to the SelA family. Homodecamer; pentamer of dimers. Binds only one seryl-tRNA(Sec) per dimer. Requires pyridoxal 5'-phosphate as cofactor.

It is found in the cytoplasm. It carries out the reaction L-seryl-tRNA(Sec) + selenophosphate + H(+) = L-selenocysteinyl-tRNA(Sec) + phosphate. Its pathway is aminoacyl-tRNA biosynthesis; selenocysteinyl-tRNA(Sec) biosynthesis; selenocysteinyl-tRNA(Sec) from L-seryl-tRNA(Sec) (bacterial route): step 1/1. Converts seryl-tRNA(Sec) to selenocysteinyl-tRNA(Sec) required for selenoprotein biosynthesis. The polypeptide is L-seryl-tRNA(Sec) selenium transferase (Escherichia coli (strain SMS-3-5 / SECEC)).